Here is a 664-residue protein sequence, read N- to C-terminus: MHFETTKDGFTIAIGNRIILSHSPDKPAFFAGFGEERMDMYRGNFDIEDYVIERTALRHAEVSGDSVTLSSAPGQAPRLRLTLDGNAIRLTALDETINRLWLRVVAETDEHVWGGGEQMSYFDMRGRRFPLWTSEPGVGRDKTTEITFKSDVSGKAGGDYYNTNYPQPTWLSSRKYALHVETSAYSVFDFRNGDFHEIEIWAVPEKIEFFAGDSFADIVSALSLHFGRQPELPDWVYNGAIIGLKDGVNSFARLEKIRAAGTKVSGLWCEDWVGLRQTSFGARLFWDWQANDTRYPHLRQKIAELADQGIRFLGYVNPYLCVDGPLFPVAESAGYFATDVDGKTALVDFGEFDCGVVDFTNPAAADWFAEEIIGKNMLDFGLSGWMADFGEYLPIDIKLSNGVDAKLMHNAWPTLWAEVNAKGVESRGKTGEALFFMRAGFTGVQAHCPLIWGGDQSVDFSRHDGLVTVICGALSSGLMGNAYHHSDIGGYTSLFGNVRTAELIMRWTEMAAFTPVMRTHEGNRPRDNLQIDQDETVLAHFARMTAIYVALAPYLKSLSAEAAKTGLPVQRPLFLHYENEPQTYAVQDCYLYGADMLVAPVWKAGETQRSLYLPGHGEWVHLWSGKRHAGGRDITVETPLGEPAVFYRADSSHHRLFEQLRTIG.

5 residues coordinate 3-(6-sulfo-alpha-D-quinovosyl)glycerol: glutamate 135, glutamate 270, arginine 283, leucine 284, and tryptophan 286. Aspartate 388 serves as the catalytic Nucleophile. Residue glutamate 391 is part of the active site. Residue arginine 438 coordinates 3-(6-sulfo-alpha-D-quinovosyl)glycerol. Aspartate 455 acts as the Proton donor in catalysis. Histidine 520 contacts 3-(6-sulfo-alpha-D-quinovosyl)glycerol.

This sequence belongs to the glycosyl hydrolase 31 family.

The catalysed reaction is 3-(6-sulfo-alpha-D-quinovosyl)glycerol + H2O = 6-sulfo-alpha-D-quinovose + glycerol. In terms of biological role, part of the sulfoquinovose monooxygenase (sulfo-SMO) pathway, a D-sulfoquinovose degradation pathway that enables the complete utilization of all carbons within sulfoquinovose (SQ) with concomitant production of inorganic sulfite. Catalyzes the first step of the pathway, the hydrolysis of sulfoquinovosyl glycerol (SQGro) to release sulfoquinovose (SQ). Hydrolyzes both epimers of SQGro, with a preference for the natural 2'R isomer. In vitro, can use the substrate analog para-nitrophenyl alpha-sulfoquinovoside (PNPSQ), but shows no detectable activity toward 4-nitrophenyl alpha-D-glucopyranoside (PNPGlc). The protein is Sulfoquinovosidase of Agrobacterium fabrum (strain C58 / ATCC 33970) (Agrobacterium tumefaciens (strain C58)).